The chain runs to 130 residues: Small ribosomal subunit protein uS11c (130 aa).

Belongs to the universal ribosomal protein uS11 family. Part of the 30S ribosomal subunit.

Its subcellular location is the plastid. It localises to the chloroplast. The protein is Small ribosomal subunit protein uS11c of Chlorokybus atmophyticus (Soil alga).